The chain runs to 906 residues: MLSLVQKIIGSRNERFIKKVSRIVQKINSLEPEFEKLSDEQLKAKTFEYRERLANGEILDNLLPEAFATVREAGKRTKNMRHYDVQLIGGIVLHQGKVAEMKTGEGKTLVATLPAYLNALTGDGVHVITVNDYLAKRDAELMSDIYEFLGMSVGVIVADLNPQQRKEAYACDITYGTNNEFGFDYLRDNMAYEKEQQVQRSRNYVIIDEVDSILIDEARTPLIISGASDDSSEMYNLFNRLVPYLEKQEKEEVENEQEQRDFYVDEKSKNAYLTEKGYAKIENMLKKEGILEEDDNLYSPHNITKMHYLNACLRAHSLYQLNIDYIVRDQEIVIIDESTGRAMPGRRWSDGLHQAIEAKEGVKINAENQTMASITFQNFFKLYNKIAGMTGTADTEAFELHSIYGLEVIIIPTNKPMIRKDHHDEIYGSVREKFDAIVEDIKERISKGQPVLVGTASIEASEVLSTLLKKKKIRHNVLNAKQHEKEASIIAMAGYPDNVTIATNMAGRGTDIILGGNLEVEIAQLEDPTPEDIAQIKAEWLKRNEAVKKAGGLCIIGSERHDSRRIDNQLRGRAARQGDPGESKFYLSMDDNLLRIFASQSMAERVKKGLKGGESLAFGFMSKVISKAQGKVESYHFDIRKNLLEYDNVVNTQRKVIYEQRQSLLEAEDVSDILADIRIDVAEQLFHDYVSAGSMHELWDLEGLEKALKSDFMIELDLQKLYEEDDSLGEEDLKRLVREAIEIEFVEKTKNLDSGAVRQFEKFSLLQSLDTHWREHLSSIDHLRNSINLRGYAQKDPKNEYKKEAFELFSTMLDNFKYEVISSLAKIRIATEEETQRAQQEWQESMSDIKAEHESVIDNNQRHDEDEQEEAPKVQQVRREGPKVKRNDPCPCGSGKKYKQCHGKVE.

ATP-binding positions include Q86, 104–108 (GEGKT), and D511. 2 stretches are compositionally biased toward basic and acidic residues: residues 853–865 (HESV…RHDE) and 877–888 (VRREGPKVKRND). The tract at residues 853–906 (HESVIDNNQRHDEDEQEEAPKVQQVRREGPKVKRNDPCPCGSGKKYKQCHGKVE) is disordered. Residues C890, C892, C901, and H902 each coordinate Zn(2+). The segment covering 896 to 906 (KKYKQCHGKVE) has biased composition (basic residues).

Belongs to the SecA family. As to quaternary structure, monomer and homodimer. Part of the essential Sec protein translocation apparatus which comprises SecA, SecYEG and auxiliary proteins SecDF-YajC and YidC. It depends on Zn(2+) as a cofactor.

It localises to the cell inner membrane. The protein localises to the cytoplasm. The enzyme catalyses ATP + H2O + cellular proteinSide 1 = ADP + phosphate + cellular proteinSide 2.. In terms of biological role, part of the Sec protein translocase complex. Interacts with the SecYEG preprotein conducting channel. Has a central role in coupling the hydrolysis of ATP to the transfer of proteins into and across the cell membrane, serving both as a receptor for the preprotein-SecB complex and as an ATP-driven molecular motor driving the stepwise translocation of polypeptide chains across the membrane. This chain is Protein translocase subunit SecA, found in Francisella tularensis subsp. holarctica (strain OSU18).